Here is a 208-residue protein sequence, read N- to C-terminus: N-(5'-phosphoribosyl)anthranilate isomerase (208 aa).

Belongs to the TrpF family.

It carries out the reaction N-(5-phospho-beta-D-ribosyl)anthranilate = 1-(2-carboxyphenylamino)-1-deoxy-D-ribulose 5-phosphate. It functions in the pathway amino-acid biosynthesis; L-tryptophan biosynthesis; L-tryptophan from chorismate: step 3/5. This chain is N-(5'-phosphoribosyl)anthranilate isomerase, found in Neisseria meningitidis serogroup C / serotype 2a (strain ATCC 700532 / DSM 15464 / FAM18).